A 276-amino-acid chain; its full sequence is Large ribosomal subunit protein uL2 (276 aa).

Residues 223 to 276 (AVMNPVDHPHGGGEGKNSVGRKSPLTPWGKPALGIKTRGRKTSDKFIVRRRNEK) are disordered. Residues 263 to 276 (KTSDKFIVRRRNEK) are compositionally biased toward basic and acidic residues.

This sequence belongs to the universal ribosomal protein uL2 family. As to quaternary structure, part of the 50S ribosomal subunit. Forms a bridge to the 30S subunit in the 70S ribosome.

Its function is as follows. One of the primary rRNA binding proteins. Required for association of the 30S and 50S subunits to form the 70S ribosome, for tRNA binding and peptide bond formation. It has been suggested to have peptidyltransferase activity; this is somewhat controversial. Makes several contacts with the 16S rRNA in the 70S ribosome. The protein is Large ribosomal subunit protein uL2 of Fusobacterium nucleatum subsp. nucleatum (strain ATCC 25586 / DSM 15643 / BCRC 10681 / CIP 101130 / JCM 8532 / KCTC 2640 / LMG 13131 / VPI 4355).